A 458-amino-acid chain; its full sequence is Tol-Pal system protein TolB (458 aa).

Positions 1 to 23 are cleaved as a signal peptide; it reads MSSVIRKWALTALMAVSSTALFA.

It belongs to the TolB family. The Tol-Pal system is composed of five core proteins: the inner membrane proteins TolA, TolQ and TolR, the periplasmic protein TolB and the outer membrane protein Pal. They form a network linking the inner and outer membranes and the peptidoglycan layer.

It localises to the periplasm. Functionally, part of the Tol-Pal system, which plays a role in outer membrane invagination during cell division and is important for maintaining outer membrane integrity. This is Tol-Pal system protein TolB from Zymomonas mobilis subsp. mobilis (strain ATCC 31821 / ZM4 / CP4).